Consider the following 308-residue polypeptide: Acetaldehyde dehydrogenase 2 (308 aa).

9 to 12 (SGNI) contacts NAD(+). Catalysis depends on cysteine 127, which acts as the Acyl-thioester intermediate. NAD(+) contacts are provided by residues 158–166 (SAGPGTRAN) and asparagine 286.

It belongs to the acetaldehyde dehydrogenase family.

It catalyses the reaction acetaldehyde + NAD(+) + CoA = acetyl-CoA + NADH + H(+). The sequence is that of Acetaldehyde dehydrogenase 2 from Parafrankia sp. (strain EAN1pec).